We begin with the raw amino-acid sequence, 81 residues long: Photosystem I iron-sulfur center (81 aa).

4Fe-4S ferredoxin-type domains follow at residues 2–31 (AHSV…MVPW) and 39–68 (IASA…VRVY). C11, C14, C17, C21, C48, C51, C54, and C58 together coordinate [4Fe-4S] cluster.

As to quaternary structure, the eukaryotic PSI reaction center is composed of at least 11 subunits. It depends on [4Fe-4S] cluster as a cofactor.

The protein resides in the plastid. Its subcellular location is the chloroplast thylakoid membrane. The enzyme catalyses reduced [plastocyanin] + hnu + oxidized [2Fe-2S]-[ferredoxin] = oxidized [plastocyanin] + reduced [2Fe-2S]-[ferredoxin]. Its function is as follows. Apoprotein for the two 4Fe-4S centers FA and FB of photosystem I (PSI); essential for photochemical activity. FB is the terminal electron acceptor of PSI, donating electrons to ferredoxin. The C-terminus interacts with PsaA/B/D and helps assemble the protein into the PSI complex. Required for binding of PsaD and PsaE to PSI. PSI is a plastocyanin-ferredoxin oxidoreductase, converting photonic excitation into a charge separation, which transfers an electron from the donor P700 chlorophyll pair to the spectroscopically characterized acceptors A0, A1, FX, FA and FB in turn. The sequence is that of Photosystem I iron-sulfur center from Chlorokybus atmophyticus (Soil alga).